Reading from the N-terminus, the 236-residue chain is Purine nucleoside phosphorylase (236 aa).

Residue H5 participates in a purine D-ribonucleoside binding. Phosphate contacts are provided by residues G21, R25, R43, and 86-89 (RYGT). Residues E163, 180-182 (EME), and 204-205 (SD) each bind a purine D-ribonucleoside.

The protein belongs to the PNP/UDP phosphorylase family. In terms of assembly, homohexamer; disulfide-linked. Trimer of homodimers, with three symmetric intersubunit disulfide bonds linking the dimers to one another.

It catalyses the reaction S-methyl-5'-thioadenosine + phosphate = 5-(methylsulfanyl)-alpha-D-ribose 1-phosphate + adenine. The enzyme catalyses a purine D-ribonucleoside + phosphate = a purine nucleobase + alpha-D-ribose 1-phosphate. The catalysed reaction is a purine 2'-deoxy-D-ribonucleoside + phosphate = a purine nucleobase + 2-deoxy-alpha-D-ribose 1-phosphate. Its pathway is purine metabolism; purine nucleoside salvage. Functionally, cleavage of guanosine or inosine to respective bases and sugar-1-phosphate molecules. Cleaves inosine, guanosine, and adenosine with a better efficiency than MTA. The sequence is that of Purine nucleoside phosphorylase from Saccharolobus solfataricus (strain ATCC 35092 / DSM 1617 / JCM 11322 / P2) (Sulfolobus solfataricus).